The sequence spans 51 residues: Non-specific lipid-transfer protein (51 aa).

Belongs to the plant LTP family.

Plant non-specific lipid-transfer proteins transfer phospholipids as well as galactolipids across membranes. May play a role in wax or cutin deposition in the cell walls of expanding epidermal cells and certain secretory tissues. The polypeptide is Non-specific lipid-transfer protein (Lycium barbarum (Barbary matrimony-vine)).